Reading from the N-terminus, the 299-residue chain is MWFRQLALFRLPPDARPDLAKLEAGMEQHCFAPPSGLEWSSQGFVAPAGHAPDRLLHPLAGGALATLKREDKVLPAAVIRDVLESKVADIEAREARPVGRKEKRELKEQVTDDLLPRAFTKTGRTRALLDVQAGWILVDAAGQKAEALVSALREALPPFPARLPHTQLSPGSAMTGWLAGEVPDGFELDCDCELKSPGDDGATVRCSKQDLTAPEVRQHLDTGKVVTRLGLVWQERIRFVLTEQLELKRLQFLDVLEEQASQAGDDAPALFDATATLMLGELRHLVADLIAALGGETEA.

It belongs to the RdgC family.

It is found in the cytoplasm. The protein localises to the nucleoid. Functionally, may be involved in recombination. In Laribacter hongkongensis (strain HLHK9), this protein is Recombination-associated protein RdgC.